A 220-amino-acid chain; its full sequence is Response regulator protein TmoT (220 aa).

The 115-residue stretch at 21-135 (VIYIVDDDNA…DLLGAIRTAL (115 aa)) folds into the Response regulatory domain. Asp70 is subject to 4-aspartylphosphate. The HTH luxR-type domain maps to 151 to 216 (LKASYESLSK…DLVRVTERLK (66 aa)). The segment at residues 175 to 194 (NKQTALELDISEATVKVHRH) is a DNA-binding region (H-T-H motif).

Phosphorylated by TmoS.

The protein localises to the cytoplasm. Its function is as follows. Member of the two-component regulatory system TmoS/TmoT involved in the regulation of toluene degradation. Induces expression of tmoX operon. The polypeptide is Response regulator protein TmoT (tmoT) (Ectopseudomonas mendocina (Pseudomonas mendocina)).